Reading from the N-terminus, the 542-residue chain is Glucans biosynthesis protein G (542 aa).

The first 34 residues, 1–34 (MVSLLRCPSSKPYSSLICSLTLGAVVALSGVAYA), serve as a signal peptide directing secretion.

It belongs to the OpgD/OpgG family.

Its subcellular location is the periplasm. The protein operates within glycan metabolism; osmoregulated periplasmic glucan (OPG) biosynthesis. Functionally, involved in the biosynthesis of osmoregulated periplasmic glucans (OPGs). The protein is Glucans biosynthesis protein G of Shewanella baltica (strain OS223).